The following is a 236-amino-acid chain: Small ribosomal subunit protein eS6 (236 aa).

It belongs to the eukaryotic ribosomal protein eS6 family. As to quaternary structure, component of the small ribosomal subunit. Mature ribosomes consist of a small (40S) and a large (60S) subunit. The 40S subunit contains about 32 different proteins and 1 molecule of RNA (18S). The 60S subunit contains 45 different proteins and 3 molecules of RNA (25S, 5.8S and 5S).

Its subcellular location is the cytoplasm. Component of the ribosome, a large ribonucleoprotein complex responsible for the synthesis of proteins in the cell. The small ribosomal subunit (SSU) binds messenger RNAs (mRNAs) and translates the encoded message by selecting cognate aminoacyl-transfer RNA (tRNA) molecules. The large subunit (LSU) contains the ribosomal catalytic site termed the peptidyl transferase center (PTC), which catalyzes the formation of peptide bonds, thereby polymerizing the amino acids delivered by tRNAs into a polypeptide chain. The nascent polypeptides leave the ribosome through a tunnel in the LSU and interact with protein factors that function in enzymatic processing, targeting, and the membrane insertion of nascent chains at the exit of the ribosomal tunnel. RPS6A is involved in nucleolar processing of pre-18S ribosomal RNA and ribosome assembly. The chain is Small ribosomal subunit protein eS6 (RPS6A) from Candida albicans (strain SC5314 / ATCC MYA-2876) (Yeast).